Reading from the N-terminus, the 197-residue chain is Holliday junction branch migration complex subunit RuvA (197 aa).

A domain I region spans residues 1–64 (MIGRLSGKLI…EDAHLLYGFA (64 aa)). A domain II region spans residues 65-143 (SKEERQTFRQ…TGGNLTVPGG (79 aa)). Positions 143 to 147 (GLPFA) are flexible linker. Residues 148 to 197 (ATPDEKSDIVNALLALGYNEKEAAAATKSLPADVTVSEGVRLALKSLMKV) form a domain III region.

The protein belongs to the RuvA family. As to quaternary structure, homotetramer. Forms an RuvA(8)-RuvB(12)-Holliday junction (HJ) complex. HJ DNA is sandwiched between 2 RuvA tetramers; dsDNA enters through RuvA and exits via RuvB. An RuvB hexamer assembles on each DNA strand where it exits the tetramer. Each RuvB hexamer is contacted by two RuvA subunits (via domain III) on 2 adjacent RuvB subunits; this complex drives branch migration. In the full resolvosome a probable DNA-RuvA(4)-RuvB(12)-RuvC(2) complex forms which resolves the HJ.

Its subcellular location is the cytoplasm. Its function is as follows. The RuvA-RuvB-RuvC complex processes Holliday junction (HJ) DNA during genetic recombination and DNA repair, while the RuvA-RuvB complex plays an important role in the rescue of blocked DNA replication forks via replication fork reversal (RFR). RuvA specifically binds to HJ cruciform DNA, conferring on it an open structure. The RuvB hexamer acts as an ATP-dependent pump, pulling dsDNA into and through the RuvAB complex. HJ branch migration allows RuvC to scan DNA until it finds its consensus sequence, where it cleaves and resolves the cruciform DNA. The protein is Holliday junction branch migration complex subunit RuvA of Chromobacterium violaceum (strain ATCC 12472 / DSM 30191 / JCM 1249 / CCUG 213 / NBRC 12614 / NCIMB 9131 / NCTC 9757 / MK).